Reading from the N-terminus, the 517-residue chain is Maturase K (517 aa).

Belongs to the intron maturase 2 family. MatK subfamily.

The protein localises to the plastid. The protein resides in the chloroplast. Usually encoded in the trnK tRNA gene intron. Probably assists in splicing its own and other chloroplast group II introns. This Dracula chimaera protein is Maturase K.